The following is a 707-amino-acid chain: Ribosomal RNA large subunit methyltransferase K/L (707 aa).

The region spanning 44-155 is the THUMP domain; it reads VIYNLCLWSR…NDILTVSFDL (112 aa).

It belongs to the methyltransferase superfamily. RlmKL family.

The protein resides in the cytoplasm. The enzyme catalyses guanosine(2445) in 23S rRNA + S-adenosyl-L-methionine = N(2)-methylguanosine(2445) in 23S rRNA + S-adenosyl-L-homocysteine + H(+). The catalysed reaction is guanosine(2069) in 23S rRNA + S-adenosyl-L-methionine = N(2)-methylguanosine(2069) in 23S rRNA + S-adenosyl-L-homocysteine + H(+). Specifically methylates the guanine in position 2445 (m2G2445) and the guanine in position 2069 (m7G2069) of 23S rRNA. The sequence is that of Ribosomal RNA large subunit methyltransferase K/L from Legionella pneumophila subsp. pneumophila (strain Philadelphia 1 / ATCC 33152 / DSM 7513).